Reading from the N-terminus, the 231-residue chain is 7-cyano-7-deazaguanine synthase (231 aa).

8 to 18 (FSGGQDSTTCL) contacts ATP. Residues C188, C197, C200, and C203 each coordinate Zn(2+).

The protein belongs to the QueC family. The cofactor is Zn(2+).

It carries out the reaction 7-carboxy-7-deazaguanine + NH4(+) + ATP = 7-cyano-7-deazaguanine + ADP + phosphate + H2O + H(+). The protein operates within purine metabolism; 7-cyano-7-deazaguanine biosynthesis. Catalyzes the ATP-dependent conversion of 7-carboxy-7-deazaguanine (CDG) to 7-cyano-7-deazaguanine (preQ(0)). The polypeptide is 7-cyano-7-deazaguanine synthase (Salmonella paratyphi A (strain ATCC 9150 / SARB42)).